The chain runs to 534 residues: Probable DNA polymerase epsilon subunit 2 (534 aa).

It belongs to the DNA polymerase epsilon subunit B family. Consists of four subunits.

Its subcellular location is the nucleus. Accessory component of the DNA polymerase epsilon complex. Participates in DNA repair and in chromosomal DNA replication. The chain is Probable DNA polymerase epsilon subunit 2 (pole-2) from Caenorhabditis elegans.